Here is a 349-residue protein sequence, read N- to C-terminus: Green-sensitive opsin-4 (349 aa).

Residues Met1–Gln36 lie on the Extracellular side of the membrane. N-linked (GlcNAc...) asparagine glycosylation is found at Asn2 and Asn15. A helical membrane pass occupies residues Phe37–Val61. Residues Thr62–Asn73 lie on the Cytoplasmic side of the membrane. A helical transmembrane segment spans residues Phe74–Ile99. Residues Asn100–Glu113 lie on the Extracellular side of the membrane. A disulfide bridge links Cys110 with Cys187. Residues Gly114–Val133 form a helical membrane-spanning segment. Topologically, residues Glu134–His152 are cytoplasmic. Residues Ala153–Ser176 form a helical membrane-spanning segment. At Arg177 to Ser202 the chain is on the extracellular side. A glycan (N-linked (GlcNAc...) asparagine) is linked at Asn200. A helical membrane pass occupies residues Tyr203 to Val230. Topologically, residues Lys231 to Arg252 are cytoplasmic. The chain crosses the membrane as a helical span at residues Met253 to Phe276. The Extracellular segment spans residues Phe277–Ser284. A helical transmembrane segment spans residues Ala285–Leu309. Residue Lys296 is modified to N6-(retinylidene)lysine. Residues Asn310 to Ala349 lie on the Cytoplasmic side of the membrane. Residues Gly329 to Ala349 are disordered. Residues Ser334–Ala349 show a composition bias toward low complexity.

This sequence belongs to the G-protein coupled receptor 1 family. Opsin subfamily. In terms of processing, phosphorylated on some or all of the serine and threonine residues present in the C-terminal region. Retinal double cone accessory photoreceptor cell outer segments.

The protein localises to the membrane. In terms of biological role, visual pigments are the light-absorbing molecules that mediate vision. They consist of an apoprotein, opsin, covalently linked to cis-retinal. This Danio rerio (Zebrafish) protein is Green-sensitive opsin-4 (opn1mw4).